Here is a 26-residue protein sequence, read N- to C-terminus: Omega-conotoxin CVIC (26 aa).

3 disulfides stabilise this stretch: cysteine 1–cysteine 16, cysteine 8–cysteine 20, and cysteine 15–cysteine 26. The residue at position 26 (cysteine 26) is a Cysteine amide.

This sequence belongs to the conotoxin O1 superfamily. Expressed by the venom duct.

The protein localises to the secreted. In terms of biological role, omega-conotoxins act at presynaptic membranes, they bind and block voltage-gated calcium channels (Cav). This toxin blocks N-, P- and Q-type calcium channels. This is Omega-conotoxin CVIC from Conus catus (Cat cone).